Consider the following 294-residue polypeptide: Nucleoside-specific channel-forming protein Tsx (294 aa).

An N-terminal signal peptide occupies residues Met1–Ala22.

This sequence belongs to the nucleoside-specific channel-forming outer membrane porin (Tsx) (TC 1.B.10) family.

It is found in the cell outer membrane. In terms of biological role, functions as a substrate-specific channel for nucleosides and deoxynucleosides. Also functions in albicidin uptake and as receptor for colicin K. Also is a receptor for several Tsx-specific bacteriophages. The sequence is that of Nucleoside-specific channel-forming protein Tsx from Klebsiella aerogenes (strain ATCC 13048 / DSM 30053 / CCUG 1429 / JCM 1235 / KCTC 2190 / NBRC 13534 / NCIMB 10102 / NCTC 10006 / CDC 819-56) (Enterobacter aerogenes).